The sequence spans 581 residues: Prolactin receptor (581 aa).

The N-terminal stretch at 1–24 (MKENAASRVVFILLLFLSVSLLNG) is a signal peptide. Residues 25–237 (QSPPEKPKLV…NDFPVKDTSM (213 aa)) lie on the Extracellular side of the membrane. Fibronectin type-III domains follow at residues 27-127 (PPEK…IVEP) and 129-229 (PPAN…IPND). The cysteines at positions 36 and 46 are disulfide-linked. An N-linked (GlcNAc...) asparagine glycan is attached at Asn-59. Cysteines 75 and 86 form a disulfide. Residue Asn-132 is glycosylated (N-linked (GlcNAc...) asparagine). Asp-211 and His-212 together coordinate Zn(2+). Positions 215–219 (WSEWS) match the WSXWS motif motif. Residues 238–258 (WIFVAILSAVICLIMVWAVAL) traverse the membrane as a helical segment. Residues 259–581 (KGYSMVTCIL…PAKKAPPALP (323 aa)) are Cytoplasmic-facing. The Box 1 motif signature appears at 267 to 275 (ILPPVPGPK). 2 disordered regions span residues 324–384 (QLMP…EKLE) and 458–499 (DQHA…PRPQ). Composition is skewed to basic and acidic residues over residues 329–349 (PSKEHTEQGVKPMHLDLDSDS), 375–384 (HTPEGPEKLE), and 469–483 (ETGREGKATKQRESE).

It belongs to the type I cytokine receptor family. Type 1 subfamily. As to quaternary structure, interacts with SMARCA1. Interacts with NEK3 and VAV2 and this interaction is prolactin-dependent. As to expression, expressed in all tissues examined; liver, peripheral blood lymphocytes, endometrium, corpus luteum, intestine, fetal thymus, fetal spleen, fetal liver and fetal brain.

The protein localises to the membrane. Its function is as follows. This is a receptor for the anterior pituitary hormone prolactin. The protein is Prolactin receptor (PRLR) of Bos taurus (Bovine).